Consider the following 62-residue polypeptide: Conotoxin Pn-014 (62 aa).

An N-terminal signal peptide occupies residues 1 to 22 (MRCLPVFVILLLLIASAPSVDA). Residues 23–48 (RPKTKDDIPLVSFQDHAKRILQTFES) constitute a propeptide that is removed on maturation. The residue at position 61 (Trp-61) is a Tryptophan amide.

Belongs to the conotoxin T superfamily. In terms of processing, contains 2 disulfide bonds that can be either 'C1-C3, C2-C4' or 'C1-C4, C2-C3', since these disulfide connectivities have been observed for conotoxins with cysteine framework V (for examples, see AC P0DQQ7 and AC P81755). As to expression, expressed by the venom duct.

Its subcellular location is the secreted. This Conus pennaceus (Feathered cone) protein is Conotoxin Pn-014.